The primary structure comprises 176 residues: Ribosome maturation factor RimP (176 aa).

This sequence belongs to the RimP family.

The protein localises to the cytoplasm. Functionally, required for maturation of 30S ribosomal subunits. The sequence is that of Ribosome maturation factor RimP from Chlorobium limicola (strain DSM 245 / NBRC 103803 / 6330).